A 712-amino-acid polypeptide reads, in one-letter code: Frizzled-6 (712 aa).

The first 18 residues, 1-18, serve as a signal peptide directing secretion; sequence MEMFTFLLTCVFLPFVRG. The region spanning 19–132 is the FZ domain; the sequence is HSLFTCEPIT…CDRLQYCDET (114 aa). The Extracellular segment spans residues 19-201; that stretch reads HSLFTCEPIT…SDELEFAKSF (183 aa). 5 cysteine pairs are disulfide-bonded: Cys24-Cys85, Cys32-Cys78, Cys69-Cys106, Cys95-Cys129, and Cys99-Cys123. Residue Asn38 is glycosylated (N-linked (GlcNAc...) asparagine). Residues 202-222 form a helical membrane-spanning segment; that stretch reads IGIVSIFCLCATLFTFLTFLI. Residues 223 to 233 are Cytoplasmic-facing; the sequence is DVKRFRYPERP. The helical transmembrane segment at 234 to 254 threads the bilayer; sequence IIYYSVCYSIVSLMYFIGFLL. Topologically, residues 255–284 are extracellular; it reads GDRTACNKADEKLELGDTVVLGSQNKACTV. The chain crosses the membrane as a helical span at residues 285 to 305; the sequence is LFMFLYFFTMAGTVWWVILTI. Residues 306-324 are Cytoplasmic-facing; the sequence is TWFLAAGRKWSCEAIEQKA. The chain crosses the membrane as a helical span at residues 325-345; it reads VWFHAVAWGIPGFLTVMLLAM. Topologically, residues 346–370 are extracellular; the sequence is NKVEGDNISGVCFVGLYDLDASRYF. An N-linked (GlcNAc...) asparagine glycan is attached at Asn352. The chain crosses the membrane as a helical span at residues 371–391; it reads VLLPLCLCVFVGLSLLLAGII. Residues 392-416 are Cytoplasmic-facing; the sequence is SLNHVRQVIQHDGRNQEKLKKFMIR. The chain crosses the membrane as a helical span at residues 417-437; the sequence is IGVFSGLYLVPLVTLLGCYVY. Topologically, residues 438–473 are extracellular; sequence EQVNRITWEITWVSDHCRQYHIPCPYQAKTETRPEL. The helical transmembrane segment at 474–494 threads the bilayer; that stretch reads ALFMIKYLMTLIVGISAVFWV. At 495–712 the chain is on the cytoplasmic side; sequence GSKKTCTEWA…EHGTGSHSDT (218 aa). The Lys-Thr-X-X-X-Trp motif, mediates interaction with the PDZ domain of Dvl family members signature appears at 498 to 503; it reads KTCTEW. Residues 588-712 form a disordered region; it reads EIQTSPETSV…EHGTGSHSDT (125 aa). Basic and acidic residues-rich tracts occupy residues 628 to 637 and 652 to 664; these read LCEEQADRKG and TRSE…KSDV. The span at 668–693 shows a compositional bias: polar residues; sequence GPMQSSSLQVPGSSEPGSLKGSTSLL. Positions 700-712 are enriched in basic and acidic residues; that stretch reads GRKEHGTGSHSDT.

Belongs to the G-protein coupled receptor Fz/Smo family. As to quaternary structure, interacts with LMBR1L. Post-translationally, ubiquitinated by ZNRF3, leading to its degradation by the proteasome.

The protein localises to the membrane. It is found in the cell membrane. The protein resides in the cell surface. Its subcellular location is the apical cell membrane. It localises to the cytoplasmic vesicle membrane. The protein localises to the endoplasmic reticulum membrane. In terms of biological role, receptor for Wnt proteins. Most of frizzled receptors are coupled to the beta-catenin canonical signaling pathway, which leads to the activation of disheveled proteins, inhibition of GSK-3 kinase, nuclear accumulation of beta-catenin and activation of Wnt target genes. A second signaling pathway involving PKC and calcium fluxes has been seen for some family members, but it is not yet clear if it represents a distinct pathway or if it can be integrated in the canonical pathway, as PKC seems to be required for Wnt-mediated inactivation of GSK-3 kinase. Both pathways seem to involve interactions with G-proteins. Activation by Wnt5A stimulates PKC activity via a G-protein-dependent mechanism. Involved in transduction and intercellular transmission of polarity information during tissue morphogenesis and/or in differentiated tissues. Together with FZD3, is involved in the neural tube closure and plays a role in the regulation of the establishment of planar cell polarity (PCP), particularly in the orientation of asymmetric bundles of stereocilia on the apical faces of a subset of auditory and vestibular sensory cells located in the inner ear. The protein is Frizzled-6 (FZD6) of Canis lupus familiaris (Dog).